A 207-amino-acid polypeptide reads, in one-letter code: Ribonuclease HII (207 aa).

Residues 12–201 (ALVAGVDEVG…VRELLDVVSI (190 aa)) form the RNase H type-2 domain. Residues Asp-18, Glu-19, and Asp-110 each contribute to the a divalent metal cation site.

The protein belongs to the RNase HII family. It depends on Mn(2+) as a cofactor. Mg(2+) serves as cofactor.

Its subcellular location is the cytoplasm. The catalysed reaction is Endonucleolytic cleavage to 5'-phosphomonoester.. Functionally, endonuclease that specifically degrades the RNA of RNA-DNA hybrids. This chain is Ribonuclease HII, found in Azotobacter vinelandii (strain DJ / ATCC BAA-1303).